The following is a 95-amino-acid chain: Aspartyl/glutamyl-tRNA(Asn/Gln) amidotransferase subunit C (95 aa).

Belongs to the GatC family. In terms of assembly, heterotrimer of A, B and C subunits.

The enzyme catalyses L-glutamyl-tRNA(Gln) + L-glutamine + ATP + H2O = L-glutaminyl-tRNA(Gln) + L-glutamate + ADP + phosphate + H(+). It catalyses the reaction L-aspartyl-tRNA(Asn) + L-glutamine + ATP + H2O = L-asparaginyl-tRNA(Asn) + L-glutamate + ADP + phosphate + 2 H(+). In terms of biological role, allows the formation of correctly charged Asn-tRNA(Asn) or Gln-tRNA(Gln) through the transamidation of misacylated Asp-tRNA(Asn) or Glu-tRNA(Gln) in organisms which lack either or both of asparaginyl-tRNA or glutaminyl-tRNA synthetases. The reaction takes place in the presence of glutamine and ATP through an activated phospho-Asp-tRNA(Asn) or phospho-Glu-tRNA(Gln). The chain is Aspartyl/glutamyl-tRNA(Asn/Gln) amidotransferase subunit C from Campylobacter curvus (strain 525.92).